The sequence spans 166 residues: Regulatory protein RecX (166 aa).

Belongs to the RecX family.

The protein resides in the cytoplasm. Its function is as follows. Modulates RecA activity. The sequence is that of Regulatory protein RecX from Shigella sonnei (strain Ss046).